The chain runs to 170 residues: Large ribosomal subunit protein uL11 (170 aa).

This sequence belongs to the universal ribosomal protein uL11 family. Part of the ribosomal stalk of the 50S ribosomal subunit. Interacts with L10 and the large rRNA to form the base of the stalk. L10 forms an elongated spine to which L12 dimers bind in a sequential fashion forming a multimeric L10(L12)X complex.

In terms of biological role, forms part of the ribosomal stalk which helps the ribosome interact with GTP-bound translation factors. The protein is Large ribosomal subunit protein uL11 of Saccharolobus islandicus (strain M.16.27) (Sulfolobus islandicus).